We begin with the raw amino-acid sequence, 232 residues long: Uracil-DNA glycosylase (232 aa).

The active-site Proton acceptor is Asp-66.

The protein belongs to the uracil-DNA glycosylase (UDG) superfamily. UNG family.

It localises to the cytoplasm. It catalyses the reaction Hydrolyzes single-stranded DNA or mismatched double-stranded DNA and polynucleotides, releasing free uracil.. In terms of biological role, excises uracil residues from the DNA which can arise as a result of misincorporation of dUMP residues by DNA polymerase or due to deamination of cytosine. This Lactobacillus helveticus (strain DPC 4571) protein is Uracil-DNA glycosylase.